A 39-amino-acid chain; its full sequence is Cytochrome b559 subunit beta (39 aa).

Residues 14 to 30 (WLTVHGLAVPTVSFLGS) form a helical membrane-spanning segment. A heme-binding site is contributed by His18.

The protein belongs to the PsbE/PsbF family. As to quaternary structure, heterodimer of an alpha subunit and a beta subunit. PSII is composed of 1 copy each of membrane proteins PsbA, PsbB, PsbC, PsbD, PsbE, PsbF, PsbH, PsbI, PsbJ, PsbK, PsbL, PsbM, PsbT, PsbX, PsbY, PsbZ, Psb30/Ycf12, at least 3 peripheral proteins of the oxygen-evolving complex and a large number of cofactors. It forms dimeric complexes. Heme b is required as a cofactor.

It is found in the plastid. Its subcellular location is the chloroplast thylakoid membrane. This b-type cytochrome is tightly associated with the reaction center of photosystem II (PSII). PSII is a light-driven water:plastoquinone oxidoreductase that uses light energy to abstract electrons from H(2)O, generating O(2) and a proton gradient subsequently used for ATP formation. It consists of a core antenna complex that captures photons, and an electron transfer chain that converts photonic excitation into a charge separation. This is Cytochrome b559 subunit beta from Lactuca sativa (Garden lettuce).